A 198-amino-acid polypeptide reads, in one-letter code: Pyridoxal 5'-phosphate synthase subunit PdxT (198 aa).

L-glutamine is bound at residue 52-54 (GES). The active-site Nucleophile is the C84. L-glutamine contacts are provided by residues R116 and 143–144 (IR). Residues H179 and E181 each act as charge relay system in the active site.

The protein belongs to the glutaminase PdxT/SNO family. In the presence of PdxS, forms a dodecamer of heterodimers. Only shows activity in the heterodimer.

The enzyme catalyses aldehydo-D-ribose 5-phosphate + D-glyceraldehyde 3-phosphate + L-glutamine = pyridoxal 5'-phosphate + L-glutamate + phosphate + 3 H2O + H(+). It catalyses the reaction L-glutamine + H2O = L-glutamate + NH4(+). It functions in the pathway cofactor biosynthesis; pyridoxal 5'-phosphate biosynthesis. In terms of biological role, catalyzes the hydrolysis of glutamine to glutamate and ammonia as part of the biosynthesis of pyridoxal 5'-phosphate. The resulting ammonia molecule is channeled to the active site of PdxS. In Caldivirga maquilingensis (strain ATCC 700844 / DSM 13496 / JCM 10307 / IC-167), this protein is Pyridoxal 5'-phosphate synthase subunit PdxT.